A 344-amino-acid polypeptide reads, in one-letter code: Arginine N-succinyltransferase (344 aa).

Leu125 is a binding site for succinyl-CoA. The active-site Proton donor is His229.

This sequence belongs to the arginine N-succinyltransferase family.

The enzyme catalyses succinyl-CoA + L-arginine = N(2)-succinyl-L-arginine + CoA + H(+). It functions in the pathway amino-acid degradation; L-arginine degradation via AST pathway; L-glutamate and succinate from L-arginine: step 1/5. Its function is as follows. Catalyzes the transfer of succinyl-CoA to arginine to produce N(2)-succinylarginine. The polypeptide is Arginine N-succinyltransferase (Shigella sonnei (strain Ss046)).